A 103-amino-acid polypeptide reads, in one-letter code: Large ribosomal subunit protein bL21 (103 aa).

This sequence belongs to the bacterial ribosomal protein bL21 family. In terms of assembly, part of the 50S ribosomal subunit. Contacts protein L20.

Its function is as follows. This protein binds to 23S rRNA in the presence of protein L20. The protein is Large ribosomal subunit protein bL21 of Chromohalobacter salexigens (strain ATCC BAA-138 / DSM 3043 / CIP 106854 / NCIMB 13768 / 1H11).